Reading from the N-terminus, the 156-residue chain is Nuclear cap-binding protein subunit 2 (156 aa).

Ser2 carries the post-translational modification N-acetylserine. A phosphoserine mark is found at Ser13 and Ser18. Residues Tyr20, Tyr43, 112-116 (RTDWD), 123-127 (RQYGR), and 133-134 (QV) contribute to the mRNA site. The 79-residue stretch at 40–118 (CTLYVGNLSF…RIIRTDWDAG (79 aa)) folds into the RRM domain. A disordered region spans residues 124–156 (QYGRGRSGGQVRDEYREDYDAGRGGYGKLAQKQ). Basic and acidic residues predominate over residues 134-144 (VRDEYREDYDA). Arg146 carries the post-translational modification Omega-N-methylarginine.

Belongs to the RRM NCBP2 family. As to quaternary structure, component of the nuclear cap-binding complex (CBC), a heterodimer composed of NCBP1/CBP80 and NCBP2/CBP20 that interacts with m7GpppG-capped RNA. Found in a U snRNA export complex with PHAX/RNUXA, NCBP1/CBP80, NCBP2/CBP20, RAN, XPO1 and m7G-capped RNA. Interacts with PHAX/RNUXA, EIF4G1, HNRNPF, HNRNPH1 and ALYREF/THOC4/ALY. Interacts with SRRT/ARS2 and KPNA3.

The protein resides in the nucleus. The protein localises to the cytoplasm. Component of the cap-binding complex (CBC), which binds co-transcriptionally to the 5' cap of pre-mRNAs and is involved in various processes such as pre-mRNA splicing, translation regulation, nonsense-mediated mRNA decay, RNA-mediated gene silencing (RNAi) by microRNAs (miRNAs) and mRNA export. The CBC complex is involved in mRNA export from the nucleus via its interaction with ALYREF/THOC4/ALY, leading to the recruitment of the mRNA export machinery to the 5' end of mRNA and to mRNA export in a 5' to 3' direction through the nuclear pore. The CBC complex is also involved in mediating U snRNA and intronless mRNAs export from the nucleus. The CBC complex is essential for a pioneer round of mRNA translation, before steady state translation when the CBC complex is replaced by cytoplasmic cap-binding protein eIF4E. The pioneer round of mRNA translation mediated by the CBC complex plays a central role in nonsense-mediated mRNA decay (NMD), NMD only taking place in mRNAs bound to the CBC complex, but not on eIF4E-bound mRNAs. The CBC complex enhances NMD in mRNAs containing at least one exon-junction complex (EJC) via its interaction with UPF1, promoting the interaction between UPF1 and UPF2. The CBC complex is also involved in 'failsafe' NMD, which is independent of the EJC complex, while it does not participate in Staufen-mediated mRNA decay (SMD). During cell proliferation, the CBC complex is also involved in microRNAs (miRNAs) biogenesis via its interaction with SRRT/ARS2, thereby being required for miRNA-mediated RNA interference. The CBC complex also acts as a negative regulator of PARN, thereby acting as an inhibitor of mRNA deadenylation. In the CBC complex, NCBP2/CBP20 recognizes and binds capped RNAs (m7GpppG-capped RNA) but requires NCBP1/CBP80 to stabilize the movement of its N-terminal loop and lock the CBC into a high affinity cap-binding state with the cap structure. The conventional cap-binding complex with NCBP2 binds both small nuclear RNA (snRNA) and messenger (mRNA) and is involved in their export from the nucleus. This chain is Nuclear cap-binding protein subunit 2 (Ncbp2), found in Mus musculus (Mouse).